A 302-amino-acid polypeptide reads, in one-letter code: Pseudouridine-5'-phosphate glycosidase (302 aa).

E25 acts as the Proton donor in catalysis. Substrate-binding residues include K86 and V106. D138 contributes to the Mn(2+) binding site. Substrate is bound at residue 140 to 142 (SAD). Catalysis depends on K159, which acts as the Nucleophile.

The protein belongs to the pseudouridine-5'-phosphate glycosidase family. In terms of assembly, homotrimer. Mn(2+) is required as a cofactor.

It carries out the reaction D-ribose 5-phosphate + uracil = psi-UMP + H2O. In terms of biological role, catalyzes the reversible cleavage of pseudouridine 5'-phosphate (PsiMP) to ribose 5-phosphate and uracil. Functions biologically in the cleavage direction, as part of a pseudouridine degradation pathway. This is Pseudouridine-5'-phosphate glycosidase from Glaesserella parasuis serovar 5 (strain SH0165) (Haemophilus parasuis).